Here is a 117-residue protein sequence, read N- to C-terminus: Fluoride-specific ion channel FluC 2 (117 aa).

A run of 2 helical transmembrane segments spans residues 1 to 21 (MISI…RSAI) and 46 to 66 (FLIG…AFFV). Gly71 and Thr74 together coordinate Na(+). Residues 95–115 (LFLNYSLLQFIIGFIACYIGY) traverse the membrane as a helical segment.

The protein belongs to the fluoride channel Fluc/FEX (TC 1.A.43) family.

The protein resides in the cell membrane. It carries out the reaction fluoride(in) = fluoride(out). Na(+) is not transported, but it plays an essential structural role and its presence is essential for fluoride channel function. Functionally, fluoride-specific ion channel. Important for reducing fluoride concentration in the cell, thus reducing its toxicity. This is Fluoride-specific ion channel FluC 2 from Staphylococcus aureus (strain MSSA476).